A 209-amino-acid chain; its full sequence is Large ribosomal subunit protein uL3 (209 aa).

Belongs to the universal ribosomal protein uL3 family. As to quaternary structure, part of the 50S ribosomal subunit. Forms a cluster with proteins L14 and L19.

Functionally, one of the primary rRNA binding proteins, it binds directly near the 3'-end of the 23S rRNA, where it nucleates assembly of the 50S subunit. The protein is Large ribosomal subunit protein uL3 of Pelobacter propionicus (strain DSM 2379 / NBRC 103807 / OttBd1).